The following is a 29-amino-acid chain: Cytochrome b6-f complex subunit 8 (29 aa).

The chain crosses the membrane as a helical span at residues 3–23 (ILALGWVSVLALFTWSIAMVV).

Belongs to the PetN family. In terms of assembly, the 4 large subunits of the cytochrome b6-f complex are cytochrome b6, subunit IV (17 kDa polypeptide, PetD), cytochrome f and the Rieske protein, while the 4 small subunits are PetG, PetL, PetM and PetN. The complex functions as a dimer.

It is found in the cellular thylakoid membrane. In terms of biological role, component of the cytochrome b6-f complex, which mediates electron transfer between photosystem II (PSII) and photosystem I (PSI), cyclic electron flow around PSI, and state transitions. The chain is Cytochrome b6-f complex subunit 8 from Gloeothece citriformis (strain PCC 7424) (Cyanothece sp. (strain PCC 7424)).